Here is a 189-residue protein sequence, read N- to C-terminus: Hypoxanthine/guanine phosphoribosyltransferase (189 aa).

It belongs to the purine/pyrimidine phosphoribosyltransferase family. Archaeal HPRT subfamily. Homodimer.

Its subcellular location is the cytoplasm. It carries out the reaction IMP + diphosphate = hypoxanthine + 5-phospho-alpha-D-ribose 1-diphosphate. It catalyses the reaction GMP + diphosphate = guanine + 5-phospho-alpha-D-ribose 1-diphosphate. It participates in purine metabolism; IMP biosynthesis via salvage pathway; IMP from hypoxanthine: step 1/1. Its function is as follows. Catalyzes a salvage reaction resulting in the formation of IMP that is energically less costly than de novo synthesis. This chain is Hypoxanthine/guanine phosphoribosyltransferase, found in Methanosarcina mazei (strain ATCC BAA-159 / DSM 3647 / Goe1 / Go1 / JCM 11833 / OCM 88) (Methanosarcina frisia).